The chain runs to 526 residues: Peptide chain release factor 3 (526 aa).

The tr-type G domain maps to 9–277 (DKRRTFAIIS…GIVEWAPKPQ (269 aa)). GTP is bound by residues 18–25 (SHPDAGKT), 86–90 (DTPGH), and 140–143 (NKLD).

This sequence belongs to the TRAFAC class translation factor GTPase superfamily. Classic translation factor GTPase family. PrfC subfamily.

Its subcellular location is the cytoplasm. Increases the formation of ribosomal termination complexes and stimulates activities of RF-1 and RF-2. It binds guanine nucleotides and has strong preference for UGA stop codons. It may interact directly with the ribosome. The stimulation of RF-1 and RF-2 is significantly reduced by GTP and GDP, but not by GMP. This Shewanella woodyi (strain ATCC 51908 / MS32) protein is Peptide chain release factor 3.